A 924-amino-acid polypeptide reads, in one-letter code: Isoleucine--tRNA ligase (924 aa).

Positions proline 58–histidine 68 match the 'HIGH' region motif. L-isoleucyl-5'-AMP is bound at residue glutamate 561. The 'KMSKS' region signature appears at lysine 602–serine 606. Lysine 605 is an ATP binding site. Positions 887, 890, 907, and 910 each coordinate Zn(2+).

Belongs to the class-I aminoacyl-tRNA synthetase family. IleS type 1 subfamily. As to quaternary structure, monomer. It depends on Zn(2+) as a cofactor.

The protein resides in the cytoplasm. The catalysed reaction is tRNA(Ile) + L-isoleucine + ATP = L-isoleucyl-tRNA(Ile) + AMP + diphosphate. Functionally, catalyzes the attachment of isoleucine to tRNA(Ile). As IleRS can inadvertently accommodate and process structurally similar amino acids such as valine, to avoid such errors it has two additional distinct tRNA(Ile)-dependent editing activities. One activity is designated as 'pretransfer' editing and involves the hydrolysis of activated Val-AMP. The other activity is designated 'posttransfer' editing and involves deacylation of mischarged Val-tRNA(Ile). In Dichelobacter nodosus (strain VCS1703A), this protein is Isoleucine--tRNA ligase.